Consider the following 198-residue polypeptide: Molybdenum cofactor guanylyltransferase (198 aa).

Residues 14–16 (LAG), Lys27, Asp73, and Asp103 each bind GTP. Asp103 contributes to the Mg(2+) binding site.

This sequence belongs to the MobA family. In terms of assembly, monomer. Mg(2+) serves as cofactor.

It localises to the cytoplasm. The enzyme catalyses Mo-molybdopterin + GTP + H(+) = Mo-molybdopterin guanine dinucleotide + diphosphate. In terms of biological role, transfers a GMP moiety from GTP to Mo-molybdopterin (Mo-MPT) cofactor (Moco or molybdenum cofactor) to form Mo-molybdopterin guanine dinucleotide (Mo-MGD) cofactor. This Pseudomonas aeruginosa (strain ATCC 15692 / DSM 22644 / CIP 104116 / JCM 14847 / LMG 12228 / 1C / PRS 101 / PAO1) protein is Molybdenum cofactor guanylyltransferase.